Reading from the N-terminus, the 373-residue chain is Probable tRNA sulfurtransferase (373 aa).

Positions 54–158 constitute a THUMP domain; that stretch reads NKNIEELSKV…NDVAYFYHKI (105 aa). ATP contacts are provided by residues 176–177, 201–202, Lys256, Gly278, and Gln287; these read LF and NF.

Belongs to the ThiI family.

Its subcellular location is the cytoplasm. The enzyme catalyses [ThiI sulfur-carrier protein]-S-sulfanyl-L-cysteine + a uridine in tRNA + 2 reduced [2Fe-2S]-[ferredoxin] + ATP + H(+) = [ThiI sulfur-carrier protein]-L-cysteine + a 4-thiouridine in tRNA + 2 oxidized [2Fe-2S]-[ferredoxin] + AMP + diphosphate. It carries out the reaction [ThiS sulfur-carrier protein]-C-terminal Gly-Gly-AMP + S-sulfanyl-L-cysteinyl-[cysteine desulfurase] + AH2 = [ThiS sulfur-carrier protein]-C-terminal-Gly-aminoethanethioate + L-cysteinyl-[cysteine desulfurase] + A + AMP + 2 H(+). It participates in cofactor biosynthesis; thiamine diphosphate biosynthesis. Functionally, catalyzes the ATP-dependent transfer of a sulfur to tRNA to produce 4-thiouridine in position 8 of tRNAs, which functions as a near-UV photosensor. Also catalyzes the transfer of sulfur to the sulfur carrier protein ThiS, forming ThiS-thiocarboxylate. This is a step in the synthesis of thiazole, in the thiamine biosynthesis pathway. The sulfur is donated as persulfide by IscS. This is Probable tRNA sulfurtransferase from Saccharolobus islandicus (strain M.16.27) (Sulfolobus islandicus).